We begin with the raw amino-acid sequence, 307 residues long: Aspartate carbamoyltransferase catalytic subunit (307 aa).

2 residues coordinate carbamoyl phosphate: Arg-59 and Thr-60. Position 87 (Lys-87) interacts with L-aspartate. Residues Arg-109, His-137, and Gln-140 each coordinate carbamoyl phosphate. 2 residues coordinate L-aspartate: Arg-173 and Arg-223. Carbamoyl phosphate is bound by residues Gly-266 and Pro-267.

Belongs to the aspartate/ornithine carbamoyltransferase superfamily. ATCase family. In terms of assembly, heterododecamer (2C3:3R2) of six catalytic PyrB chains organized as two trimers (C3), and six regulatory PyrI chains organized as three dimers (R2).

It catalyses the reaction carbamoyl phosphate + L-aspartate = N-carbamoyl-L-aspartate + phosphate + H(+). The protein operates within pyrimidine metabolism; UMP biosynthesis via de novo pathway; (S)-dihydroorotate from bicarbonate: step 2/3. Functionally, catalyzes the condensation of carbamoyl phosphate and aspartate to form carbamoyl aspartate and inorganic phosphate, the committed step in the de novo pyrimidine nucleotide biosynthesis pathway. In Helicobacter pylori (strain HPAG1), this protein is Aspartate carbamoyltransferase catalytic subunit.